The sequence spans 35 residues: KSCCKNTLGRNCYNTCRFMKKPRKTCSGLCGCKIS.

3 disulfide bridges follow: Cys-4-Cys-32, Cys-12-Cys-30, and Cys-16-Cys-26.

In terms of processing, contains 4 disulfide bonds.

It localises to the secreted. Functionally, antimicrobial peptide disrupting membranes. Has antibacterial against Gram-positive bacteria S.aureus (MIC=6.5 uM) and B.subtilis (MIC=3.25 uM) but not against Gram-negative bacterium E.coli. Has antifungal activity against C.albicans (MIC=1.63 uM). The protein is Thionin NsW1 of Nigella sativa (Black cumin).